The following is a 419-amino-acid chain: Acetylornithine aminotransferase (419 aa).

Pyridoxal 5'-phosphate contacts are provided by residues 116–117 and phenylalanine 149; that span reads GA. Arginine 152 contacts N(2)-acetyl-L-ornithine. 240-243 is a binding site for pyridoxal 5'-phosphate; that stretch reads DEVQ. Position 269 is an N6-(pyridoxal phosphate)lysine (lysine 269). Serine 296 lines the N(2)-acetyl-L-ornithine pocket. Threonine 297 contributes to the pyridoxal 5'-phosphate binding site.

It belongs to the class-III pyridoxal-phosphate-dependent aminotransferase family. ArgD subfamily. In terms of assembly, homodimer. Pyridoxal 5'-phosphate serves as cofactor.

It is found in the cytoplasm. It catalyses the reaction N(2)-acetyl-L-ornithine + 2-oxoglutarate = N-acetyl-L-glutamate 5-semialdehyde + L-glutamate. The protein operates within amino-acid biosynthesis; L-arginine biosynthesis; N(2)-acetyl-L-ornithine from L-glutamate: step 4/4. In Prochlorococcus marinus (strain SARG / CCMP1375 / SS120), this protein is Acetylornithine aminotransferase.